A 223-amino-acid chain; its full sequence is Endonuclease V (223 aa).

The Mg(2+) site is built by D35 and D103.

It belongs to the endonuclease V family. It depends on Mg(2+) as a cofactor.

The protein localises to the cytoplasm. The enzyme catalyses Endonucleolytic cleavage at apurinic or apyrimidinic sites to products with a 5'-phosphate.. Functionally, DNA repair enzyme involved in the repair of deaminated bases. Selectively cleaves double-stranded DNA at the second phosphodiester bond 3' to a deoxyinosine leaving behind the intact lesion on the nicked DNA. The polypeptide is Endonuclease V (Salmonella agona (strain SL483)).